The sequence spans 248 residues: tRNA (guanine-N(1)-)-methyltransferase (248 aa).

S-adenosyl-L-methionine is bound by residues G113 and 133–138; that span reads IGDYVL. The tract at residues 227 to 248 is disordered; the sequence is RPAQTIRAKGESQKTPKNKTDG. Over residues 234–248 the composition is skewed to basic and acidic residues; that stretch reads AKGESQKTPKNKTDG.

This sequence belongs to the RNA methyltransferase TrmD family. As to quaternary structure, homodimer.

The protein resides in the cytoplasm. The enzyme catalyses guanosine(37) in tRNA + S-adenosyl-L-methionine = N(1)-methylguanosine(37) in tRNA + S-adenosyl-L-homocysteine + H(+). Its function is as follows. Specifically methylates guanosine-37 in various tRNAs. This Rhodopseudomonas palustris (strain TIE-1) protein is tRNA (guanine-N(1)-)-methyltransferase.